The primary structure comprises 81 residues: MVKVRLARFGRKKRPFYRIVVTDSRKRRDSGWIESIGYYNPMTEPATVKMDLDRLNYWLGVGAQMSERVTKLKKIAEENNA.

Belongs to the bacterial ribosomal protein bS16 family.

In Nautilia profundicola (strain ATCC BAA-1463 / DSM 18972 / AmH), this protein is Small ribosomal subunit protein bS16.